The chain runs to 156 residues: Large ribosomal subunit protein uL22c (156 aa).

It belongs to the universal ribosomal protein uL22 family. Part of the 50S ribosomal subunit.

The protein localises to the plastid. It localises to the chloroplast. In terms of biological role, this protein binds specifically to 23S rRNA. The globular domain of the protein is located near the polypeptide exit tunnel on the outside of the subunit, while an extended beta-hairpin is found that lines the wall of the exit tunnel in the center of the 70S ribosome. This Buxus microphylla (Littleleaf boxwood) protein is Large ribosomal subunit protein uL22c (rpl22).